The sequence spans 470 residues: MAGGVTGGGSATWSDRFEQGLHPAIERFNASIGFDITLLQEDLDGSMAHARMLAQCGVISEAEADQLCGGLEQIRAEAAEGRFQPGLDDEDVHFAVERRLIALLGPVGKKLHTGRSRNDQVGTDLRLWLRRRIDELIPQVKTFQRALLRQALSHRRTLIPGYTHLQRAQPVCLAHHLLAYVEMLERDRQRLEDVRKRVNVSPLGAAALAGTPVPIDRRSTAAALGFDGLYANSLDAVSDRDFAVEFSAAISLVMVHLSRLGEEVIFWASEECGFVRLSDRCATGSSLMPQKKNPDVPELVRGKCGRVFGHLQGLLTMIKGLPLAYNKDFQEDKEALFDVVSTGSQCLEAMTILMDEGLSFREDRLEAAVAADFSNATDVADYLVARQVPFREAYQIVGSVVKQCLSEGVLLRDLSLERWQSFHPAIESDLYDALAPRQVVAARTSEGGTGFDRVEEQLSAWSERLDLANG.

Belongs to the lyase 1 family. Argininosuccinate lyase subfamily.

The protein localises to the cytoplasm. It carries out the reaction 2-(N(omega)-L-arginino)succinate = fumarate + L-arginine. It functions in the pathway amino-acid biosynthesis; L-arginine biosynthesis; L-arginine from L-ornithine and carbamoyl phosphate: step 3/3. The polypeptide is Argininosuccinate lyase (Synechococcus sp. (strain WH7803)).